Here is a 348-residue protein sequence, read N- to C-terminus: tRNA N6-adenosine threonylcarbamoyltransferase (348 aa).

2 residues coordinate Fe cation: His111 and His115. Substrate contacts are provided by residues 134-138, Asp167, Gly180, Asp184, and Asn280; that span reads LVSGG. Residue Asp308 coordinates Fe cation.

Belongs to the KAE1 / TsaD family. Fe(2+) is required as a cofactor.

It is found in the cytoplasm. It carries out the reaction L-threonylcarbamoyladenylate + adenosine(37) in tRNA = N(6)-L-threonylcarbamoyladenosine(37) in tRNA + AMP + H(+). In terms of biological role, required for the formation of a threonylcarbamoyl group on adenosine at position 37 (t(6)A37) in tRNAs that read codons beginning with adenine. Is involved in the transfer of the threonylcarbamoyl moiety of threonylcarbamoyl-AMP (TC-AMP) to the N6 group of A37, together with TsaE and TsaB. TsaD likely plays a direct catalytic role in this reaction. The polypeptide is tRNA N6-adenosine threonylcarbamoyltransferase (Rippkaea orientalis (strain PCC 8801 / RF-1) (Cyanothece sp. (strain PCC 8801))).